Reading from the N-terminus, the 141-residue chain is Envelope glycoprotein L (141 aa).

A signal peptide spans 1–19; sequence MKWLLGAYVCLCLANILNA. The segment at 21-131 is interaction with gH; the sequence is IPNPCCNVFA…TSAIKFKSKY (111 aa).

The protein belongs to the herpesviridae glycoprotein L family. Interacts with glycoprotein H (gH); this interaction is necessary for the correct processing and cell surface expression of gH. The heterodimer gH/gL seems to interact with gB trimers during fusion.

The protein resides in the virion membrane. It localises to the host cell membrane. It is found in the host Golgi apparatus. Its subcellular location is the host trans-Golgi network. Functionally, the heterodimer glycoprotein H-glycoprotein L is required for the fusion of viral and plasma membranes leading to virus entry into the host cell. Acts as a functional inhibitor of gH and maintains gH in an inhibited form. Upon binding to host integrins, gL dissociates from gH leading to activation of the viral fusion glycoproteins gB and gH. This is Envelope glycoprotein L from Saimiriine herpesvirus 2 (strain 11) (SaHV-2).